Consider the following 88-residue polypeptide: MRKNKLEKMLKFPCLFTYKVIGLAQPELVDKIVKIIQCKLPGDYVPQIKSSNKGNYLSISITICANTFEEIESLYYELSNINIVRMVL.

It belongs to the UPF0250 family.

The protein is UPF0250 protein bbp_432 of Buchnera aphidicola subsp. Baizongia pistaciae (strain Bp).